The chain runs to 226 residues: ATP synthase subunit a (226 aa).

5 helical membrane passes run Phe-17–Ala-37, Leu-79–Phe-99, Ser-105–Ile-125, Phe-168–Val-188, and Met-200–Val-222.

This sequence belongs to the ATPase A chain family. As to quaternary structure, F-type ATPases have 2 components, CF(1) - the catalytic core - and CF(0) - the membrane proton channel. CF(1) has five subunits: alpha(3), beta(3), gamma(1), delta(1), epsilon(1). CF(0) has three main subunits: a(1), b(2) and c(9-12). The alpha and beta chains form an alternating ring which encloses part of the gamma chain. CF(1) is attached to CF(0) by a central stalk formed by the gamma and epsilon chains, while a peripheral stalk is formed by the delta and b chains.

It is found in the cell inner membrane. Its function is as follows. Key component of the proton channel; it plays a direct role in the translocation of protons across the membrane. The polypeptide is ATP synthase subunit a (Campylobacter fetus subsp. fetus (strain 82-40)).